The primary structure comprises 802 residues: Pyrophosphate-energized membrane proton pump 2 (802 aa).

Transmembrane regions (helical) follow at residues 45-65 (VLSI…ASTS), 66-86 (PIIV…IYLT), 118-138 (YSTI…IYLF), 160-180 (VAAF…GMWV), 206-226 (AGGF…AILY), and 246-266 (LPLL…FAQL). A substrate-binding site is contributed by lysine 273. Mg(2+) contacts are provided by aspartate 276, aspartate 280, and aspartate 306. 5 helical membrane passes run 348–368 (FILF…IGIL), 386–406 (MAVL…TFGA), 421–441 (WFNF…FVWI), 468–488 (IIAG…TISV), and 511–531 (GGLF…AYVL). Aspartate 541 and asparagine 568 together coordinate Mg(2+). Helical transmembrane passes span 577-597 (FAIG…MDEV), 615-635 (VFVG…WACA), 686-706 (GALA…LGYY), and 716-736 (VVAS…LFLN). Residues aspartate 743 and aspartate 773 each contribute to the Mg(2+) site. Lysine 776 provides a ligand contact to substrate. Residues 782–802 (SIHVLIKMLATITLVMAPVFL) traverse the membrane as a helical segment.

It belongs to the H(+)-translocating pyrophosphatase (TC 3.A.10) family. K(+)-insensitive subfamily. Monomer. As to expression, ubiquitous. Mostly expressed in cotyledons, roots and flowers. Especially high levels in trichomes, sepals and stamen filaments.

The protein localises to the golgi apparatus membrane. The enzyme catalyses diphosphate + H2O + H(+)(in) = 2 phosphate + 2 H(+)(out). Activated by Mg(+) but not by K(+). Inhibited by Ca(2+). Functionally, pyrophosphatase active in both inorganic pyrophosphate hydrolysis and H(+) translocation. This is Pyrophosphate-energized membrane proton pump 2 (AVPL1) from Arabidopsis thaliana (Mouse-ear cress).